A 359-amino-acid polypeptide reads, in one-letter code: MKKYLALALIAPLLISCSTTKKGDTYNEAWVKDTNGFDILMGQFAHNIENIWGFKEVVIAGPKDYVKYTDQYQTRSHINFDDGTITIETIAGTEPAAHLRRAIIKTLLMGDDPSSVDLYSDVDDITISKEPFLYGQVVDNTGQPIRWEGRASNFADYLLKNRLQSRNNGLRIIYSVTINMVPNHLDKRAHKYLGMVRQASRKYGVDESLILAIMQTESSFNPYAVSRSDALGLMQVVQHTAGKDVFRSQGKSGTPSRSFLFDPASNIDTGTAYLAMLNNVYLGGIDNPTSRRYAVITAYNGGAGSVLRVFSNDKIQAANIINTMTPGDVYQTLTTRHPSAESRRYLYKVNTAQKSYRRR.

The N-terminal stretch at 1–16 (MKKYLALALIAPLLIS) is a signal peptide. Cys17 carries N-palmitoyl cysteine lipidation. A lipid anchor (S-diacylglycerol cysteine) is attached at Cys17.

The protein belongs to the transglycosylase Slt family.

It is found in the cell outer membrane. The catalysed reaction is Exolytic cleavage of the (1-&gt;4)-beta-glycosidic linkage between N-acetylmuramic acid (MurNAc) and N-acetylglucosamine (GlcNAc) residues in peptidoglycan, from either the reducing or the non-reducing ends of the peptidoglycan chains, with concomitant formation of a 1,6-anhydrobond in the MurNAc residue.. Its function is as follows. Murein-degrading enzyme. May play a role in recycling of muropeptides during cell elongation and/or cell division. This chain is Membrane-bound lytic murein transglycosylase C, found in Escherichia coli O8 (strain IAI1).